The primary structure comprises 437 residues: MSAPRVSFVSLGCPKALVDSERIITRLRAEGYEIARKHDGADLVVVNTCGFLDSARDESLNAIGSALSENGRVIVTGCLGAEPDVIREKHPNVLAITGPQAYESVMAAVHEAAPPSHDPYIDLLPPQGVKLTPRHYAYLKISEGCNNRCTFCIIPALRGDLVSRPAADVLREAEKLAKAGVKELLVISQDTSAYGIDIKYQTSMFGDREVRAKFLDLSEELGKLGIWVRMHYVYPYPHVADVIPLMAEGKILPYLDIPFQHASPQVLKNMRRPAHGEKTLERIRGWRDVCPDLAIRSTFIVGFPGETDEDFEMLLDWLDEAKIDRAGCFKYEPVKGARSNDLGLEQVPQDVKEARWHRFMQRQQKISATQLAKKVGKRLPVLIDEAHGTSAKGRTKYDAPEIDGSVHIQSRRPMRAGDIVTVKIERADAYDLYGSAV.

Positions 4-114 constitute an MTTase N-terminal domain; sequence PRVSFVSLGC…VMAAVHEAAP (111 aa). Positions 13, 49, 78, 145, 149, and 152 each coordinate [4Fe-4S] cluster. One can recognise a Radical SAM core domain in the interval 131–369; sequence LTPRHYAYLK…MQRQQKISAT (239 aa). In terms of domain architecture, TRAM spans 372-437; sequence AKKVGKRLPV…DAYDLYGSAV (66 aa).

It belongs to the methylthiotransferase family. RimO subfamily. [4Fe-4S] cluster is required as a cofactor.

Its subcellular location is the cytoplasm. It carries out the reaction L-aspartate(89)-[ribosomal protein uS12]-hydrogen + (sulfur carrier)-SH + AH2 + 2 S-adenosyl-L-methionine = 3-methylsulfanyl-L-aspartate(89)-[ribosomal protein uS12]-hydrogen + (sulfur carrier)-H + 5'-deoxyadenosine + L-methionine + A + S-adenosyl-L-homocysteine + 2 H(+). Catalyzes the methylthiolation of an aspartic acid residue of ribosomal protein uS12. This is Ribosomal protein uS12 methylthiotransferase RimO from Mesorhizobium japonicum (strain LMG 29417 / CECT 9101 / MAFF 303099) (Mesorhizobium loti (strain MAFF 303099)).